Here is an 89-residue protein sequence, read N- to C-terminus: Small ribosomal subunit protein uS15 (89 aa).

This sequence belongs to the universal ribosomal protein uS15 family. As to quaternary structure, part of the 30S ribosomal subunit. Forms a bridge to the 50S subunit in the 70S ribosome, contacting the 23S rRNA.

Its function is as follows. One of the primary rRNA binding proteins, it binds directly to 16S rRNA where it helps nucleate assembly of the platform of the 30S subunit by binding and bridging several RNA helices of the 16S rRNA. In terms of biological role, forms an intersubunit bridge (bridge B4) with the 23S rRNA of the 50S subunit in the ribosome. The chain is Small ribosomal subunit protein uS15 from Bacillus licheniformis (strain ATCC 14580 / DSM 13 / JCM 2505 / CCUG 7422 / NBRC 12200 / NCIMB 9375 / NCTC 10341 / NRRL NRS-1264 / Gibson 46).